Here is a 1291-residue protein sequence, read N- to C-terminus: Cytoplasmic FMR1-interacting protein (1291 aa).

Positions 1269-1291 (HPSVISSSSHYQDPQKLRQSMNN) are disordered. A compositionally biased stretch (polar residues) spans 1271 to 1291 (SVISSSSHYQDPQKLRQSMNN).

The protein belongs to the CYFIP family. As to quaternary structure, interacts with Fmr1 and Rac1. Component of the WAVE complex composed of Hem/Kette, Scar/Wave and Cyfip where it binds through its C-terminus directly to Hem.

It localises to the cytoplasm. Plays a role in guidance and morphology of central and peripheral axons and in synaptic morphology. Also required for formation of cell membrane protrusions and for bristle development. This is Cytoplasmic FMR1-interacting protein from Drosophila pseudoobscura pseudoobscura (Fruit fly).